Reading from the N-terminus, the 403-residue chain is MPFPTIPPIAGVEIATGRAGFYKHEREDLLLMRFAEGTSAAGVFTRHGVGSAPVDWCKRQLAATGGADVRALVVNAGCANSFTGKPGADAVRRVATAVGKRFDCRQRDVMMASTGVIGVILDDSKITARLPEVESRLKADAWAEAGRAIMTTDTFPKGAYATAVIDGHEVKIAGIAKGSGMIAPDMATMLAFVATDAAIAPAALQTLVSLYTRTTFNCVTVDGDRSTNDTLLLFATGQSGAPKIHRAGDKRLADFREKLEGVLLDLALQLVKDGEGATKFVKITVNGAESPASARKIARTIAESPLVKTAFAGEDANWGRIVMAVGRADEPVAREKISVKFGDLYAARDGLISAEYDEAKMSAYVKNQAFEVSVDVGVGRGSATVWTCDLTKQYVAINGDYRS.

Positions 151, 177, 188, 275, 398, and 403 each coordinate substrate. Catalysis depends on T188, which acts as the Nucleophile.

This sequence belongs to the ArgJ family. As to quaternary structure, heterotetramer of two alpha and two beta chains.

The protein localises to the cytoplasm. The enzyme catalyses N(2)-acetyl-L-ornithine + L-glutamate = N-acetyl-L-glutamate + L-ornithine. It catalyses the reaction L-glutamate + acetyl-CoA = N-acetyl-L-glutamate + CoA + H(+). It functions in the pathway amino-acid biosynthesis; L-arginine biosynthesis; L-ornithine and N-acetyl-L-glutamate from L-glutamate and N(2)-acetyl-L-ornithine (cyclic): step 1/1. Its pathway is amino-acid biosynthesis; L-arginine biosynthesis; N(2)-acetyl-L-ornithine from L-glutamate: step 1/4. In terms of biological role, catalyzes two activities which are involved in the cyclic version of arginine biosynthesis: the synthesis of N-acetylglutamate from glutamate and acetyl-CoA as the acetyl donor, and of ornithine by transacetylation between N(2)-acetylornithine and glutamate. The polypeptide is Arginine biosynthesis bifunctional protein ArgJ (Caulobacter vibrioides (strain ATCC 19089 / CIP 103742 / CB 15) (Caulobacter crescentus)).